We begin with the raw amino-acid sequence, 255 residues long: Polycomb group RING finger protein 5 (255 aa).

The RING-type zinc-finger motif lies at 18 to 57 (CYICKGYLIKPTTVTECLHTFCKTCIVQHFEDSNDCPRCG). Residues 97–132 (WKKNKPQENGQDDMSKVDKPKVDEEGDENQDDKDYH) form a disordered region. A compositionally biased stretch (basic and acidic residues) spans 109–119 (DMSKVDKPKVD).

As to quaternary structure, component of a PRC1-like complex that contains PCGF5, RNF2 and UBE2D3. Interacts with RNF2; the interaction is direct. Interacts with CBX6, CBX7 and CBX8. Interacts with AUTS2; the interaction is direct. Identified in a complex that contains AUTS2, PCGF5, CSNK2B and RNF2.

It is found in the nucleus. Its subcellular location is the nucleoplasm. In terms of biological role, component of a Polycomb group (PcG) multiprotein PRC1-like complex, a complex class required to maintain the transcriptionally repressive state of many genes, including Hox genes, throughout development. PcG PRC1 complex acts via chromatin remodeling and modification of histones; it mediates monoubiquitination of histone H2A 'Lys-119', rendering chromatin heritably changed in its expressibility. Within the PRC1-like complex, regulates RNF2 ubiquitin ligase activity. Plays a redundant role with PCGF3 as part of a PRC1-like complex that mediates monoubiquitination of histone H2A 'Lys-119' on the X chromosome and is required for normal silencing of one copy of the X chromosome in XX females. This chain is Polycomb group RING finger protein 5 (PCGF5), found in Bos taurus (Bovine).